Reading from the N-terminus, the 448-residue chain is DNA repair protein RadA (448 aa).

The segment at 10 to 27 adopts a C4-type zinc-finger fold; the sequence is CSNCGNTSPKWSGQCFDC. Residue 91-98 participates in ATP binding; the sequence is GDPGIGKS. The RadA KNRFG motif signature appears at 250-254; that stretch reads KNRFG. Residues 349–448 are lon-protease-like; sequence EVYLSIAGGL…KDLKLLLGSS (100 aa).

The protein belongs to the RecA family. RadA subfamily.

Its function is as follows. DNA-dependent ATPase involved in processing of recombination intermediates, plays a role in repairing DNA breaks. Stimulates the branch migration of RecA-mediated strand transfer reactions, allowing the 3' invading strand to extend heteroduplex DNA faster. Binds ssDNA in the presence of ADP but not other nucleotides, has ATPase activity that is stimulated by ssDNA and various branched DNA structures, but inhibited by SSB. Does not have RecA's homology-searching function. In Rickettsia bellii (strain RML369-C), this protein is DNA repair protein RadA.